A 461-amino-acid polypeptide reads, in one-letter code: Asparagine--tRNA ligase (461 aa).

It belongs to the class-II aminoacyl-tRNA synthetase family. In terms of assembly, homodimer.

It is found in the cytoplasm. The catalysed reaction is tRNA(Asn) + L-asparagine + ATP = L-asparaginyl-tRNA(Asn) + AMP + diphosphate + H(+). The protein is Asparagine--tRNA ligase of Geobacter metallireducens (strain ATCC 53774 / DSM 7210 / GS-15).